We begin with the raw amino-acid sequence, 686 residues long: Translation initiation factor IF-2 (686 aa).

The tract at residues 53-105 is disordered; it reads EKPSVADEFEVEEKVVRSKKNSNKKKKKGKGNEDKRQENFAGRQQTQTVETPD. Residues 69–81 show a composition bias toward basic residues; it reads RSKKNSNKKKKKG. A tr-type G domain is found at 188-357; the sequence is ERPAVVTIMG…LLVSEVEEYK (170 aa). Positions 197–204 are G1; it reads GHVDHGKT. 197 to 204 contacts GTP; sequence GHVDHGKT. The tract at residues 222–226 is G2; sequence GITQH. Residues 243–246 form a G3 region; that stretch reads DTPG. GTP contacts are provided by residues 243–247 and 297–300; these read DTPGH and NKMD. Positions 297 to 300 are G4; that stretch reads NKMD. The G5 stretch occupies residues 333–335; that stretch reads SAI.

It belongs to the TRAFAC class translation factor GTPase superfamily. Classic translation factor GTPase family. IF-2 subfamily.

The protein localises to the cytoplasm. One of the essential components for the initiation of protein synthesis. Protects formylmethionyl-tRNA from spontaneous hydrolysis and promotes its binding to the 30S ribosomal subunits. Also involved in the hydrolysis of GTP during the formation of the 70S ribosomal complex. The polypeptide is Translation initiation factor IF-2 (Bacillus cereus (strain ATCC 10987 / NRS 248)).